The chain runs to 226 residues: Lipoprotein-releasing system ATP-binding protein LolD (226 aa).

Positions 5–226 (LKATNINKIY…LLRNGHWENY (222 aa)) constitute an ABC transporter domain. Position 41-48 (41-48 (GTSGSGKS)) interacts with ATP.

The protein belongs to the ABC transporter superfamily. Lipoprotein translocase (TC 3.A.1.125) family. The complex is composed of two ATP-binding proteins (LolD) and two transmembrane proteins (LolC and LolE).

It localises to the cell inner membrane. Functionally, part of the ABC transporter complex LolCDE involved in the translocation of mature outer membrane-directed lipoproteins, from the inner membrane to the periplasmic chaperone, LolA. Responsible for the formation of the LolA-lipoprotein complex in an ATP-dependent manner. The polypeptide is Lipoprotein-releasing system ATP-binding protein LolD (Psychrobacter arcticus (strain DSM 17307 / VKM B-2377 / 273-4)).